The sequence spans 192 residues: Protein ORF45 (192 aa).

Plays a role in the expression of ORF41, which itself is required for late gene expression. The chain is Protein ORF45 from Autographa californica nuclear polyhedrosis virus (AcMNPV).